We begin with the raw amino-acid sequence, 445 residues long: 6-phosphogluconate dehydrogenase, decarboxylating (445 aa).

Residues 1-4, 22-24, 63-65, and N91 contribute to the NADP(+) site; these read AVMG, NRS, and VKA. Substrate-binding positions include N91 and 117–119; that span reads SGG. K172 acts as the Proton acceptor in catalysis. 175–176 is a substrate binding site; that stretch reads HN. E179 serves as the catalytic Proton donor. Substrate is bound by residues Y180, K249, R276, R434, and H440.

The protein belongs to the 6-phosphogluconate dehydrogenase family. As to quaternary structure, homodimer.

The catalysed reaction is 6-phospho-D-gluconate + NADP(+) = D-ribulose 5-phosphate + CO2 + NADPH. The protein operates within carbohydrate degradation; pentose phosphate pathway; D-ribulose 5-phosphate from D-glucose 6-phosphate (oxidative stage): step 3/3. Catalyzes the oxidative decarboxylation of 6-phosphogluconate to ribulose 5-phosphate and CO(2), with concomitant reduction of NADP to NADPH. In Shigella sonnei, this protein is 6-phosphogluconate dehydrogenase, decarboxylating (gnd).